The following is a 203-amino-acid chain: Cardiotrophin-1 (203 aa).

The protein belongs to the IL-6 superfamily. Highly expressed in heart, skeletal muscle, liver, lung and kidney. Lower levels in testis and brain. No expression in spleen.

It localises to the secreted. Induces cardiac myocyte hypertrophy in vitro. Binds to and activates the ILST/gp130 receptor. The protein is Cardiotrophin-1 (Ctf1) of Mus musculus (Mouse).